The primary structure comprises 518 residues: Membrane-bound lytic murein transglycosylase F (518 aa).

The first 21 residues, 1–21 (MKKLKINYLFIGILALLLAVA), serve as a signal peptide directing secretion. Positions 22–269 (LWPSIPWFGK…RIEEKYLGHG (248 aa)) are non-LT domain. Positions 270–518 (DDFDYVDTRT…SRKGSEEKQN (249 aa)) are LT domain. Glutamate 314 is an active-site residue.

It in the N-terminal section; belongs to the bacterial solute-binding protein 3 family. The protein in the C-terminal section; belongs to the transglycosylase Slt family.

Its subcellular location is the cell outer membrane. The enzyme catalyses Exolytic cleavage of the (1-&gt;4)-beta-glycosidic linkage between N-acetylmuramic acid (MurNAc) and N-acetylglucosamine (GlcNAc) residues in peptidoglycan, from either the reducing or the non-reducing ends of the peptidoglycan chains, with concomitant formation of a 1,6-anhydrobond in the MurNAc residue.. Its function is as follows. Murein-degrading enzyme that degrades murein glycan strands and insoluble, high-molecular weight murein sacculi, with the concomitant formation of a 1,6-anhydromuramoyl product. Lytic transglycosylases (LTs) play an integral role in the metabolism of the peptidoglycan (PG) sacculus. Their lytic action creates space within the PG sacculus to allow for its expansion as well as for the insertion of various structures such as secretion systems and flagella. The polypeptide is Membrane-bound lytic murein transglycosylase F (Escherichia coli (strain ATCC 8739 / DSM 1576 / NBRC 3972 / NCIMB 8545 / WDCM 00012 / Crooks)).